The chain runs to 434 residues: Alpha-enolase (434 aa).

Ser-40 serves as a coordination point for Mg(2+). Residues His-158 and Glu-167 each coordinate substrate. The active-site Proton donor is Glu-210. Mg(2+)-binding residues include Asp-245, Glu-293, and Asp-318. Glu-293 and Asp-318 together coordinate substrate. Lys-343 serves as the catalytic Proton acceptor. Substrate contacts are provided by residues 370–373 (SHRS) and Lys-394.

This sequence belongs to the enolase family. As to quaternary structure, homodimer. Requires Mg(2+) as cofactor.

It is found in the cytoplasm. The catalysed reaction is (2R)-2-phosphoglycerate = phosphoenolpyruvate + H2O. The protein operates within carbohydrate degradation; glycolysis; pyruvate from D-glyceraldehyde 3-phosphate: step 4/5. This Alligator mississippiensis (American alligator) protein is Alpha-enolase.